The following is a 342-amino-acid chain: Palmitoyltransferase PFA4 (342 aa).

The Cytoplasmic segment spans residues 1-8; it reads MITFSNPW. The chain crosses the membrane as a helical span at residues 9-29; it reads IGVIIPCIIIFTLSTFSAIYI. The Lumenal portion of the chain corresponds to 30 to 38; sequence LPHHVSNNE. A helical transmembrane segment spans residues 39–59; the sequence is LTLFICASAMVWISYIIAIIV. Residues 60–124 lie on the Cytoplasmic side of the membrane; it reads PPGSPPKNYT…GHRNMPHFMR (65 aa). The 51-residue stretch at 77-127 folds into the DHHC domain; sequence MYCLKCKAYKPERTHHSKALGVCVLKMDHHCPWTNNTVGHRNMPHFMRFLV. Cysteine 107 acts as the S-palmitoyl cysteine intermediate in catalysis. The helical transmembrane segment at 125 to 145 threads the bilayer; sequence FLVWVDMTVGYLFIRLCIRIM. Over 146-162 the chain is Lumenal; it reads KLWRDKHLPSYLFDKTE. Residues 163-183 form a helical membrane-spanning segment; it reads VILSIVFLPASFFVLFTVGIL. Residues 184 to 342 are Cytoplasmic-facing; it reads TIRVFVNMCN…ADFGVEHTDI (159 aa).

The protein belongs to the DHHC palmitoyltransferase family. PFA4 subfamily.

The protein localises to the endoplasmic reticulum membrane. It catalyses the reaction L-cysteinyl-[protein] + hexadecanoyl-CoA = S-hexadecanoyl-L-cysteinyl-[protein] + CoA. Its function is as follows. Mediates the reversible addition of palmitate to target proteins, thereby regulating their membrane association and biological function. In Yarrowia lipolytica (strain CLIB 122 / E 150) (Yeast), this protein is Palmitoyltransferase PFA4.